Reading from the N-terminus, the 282-residue chain is E3 ubiquitin-protein ligase RNF217 (282 aa).

The segment at 1–218 (MSCRVCLEDR…LSIFGCKYRY (218 aa)) is TRIAD supradomain. Zn(2+) is bound by residues C3, C6, C23, C26, C123, C126, H131, C136, C163, and C166. The RING-type 1 zinc-finger motif lies at 3–49 (CRVCLEDRSIKPLPCCKKPVCDECLKRYLSSQVQLGQAEIQCPITEC). An IBR-type zinc finger spans residues 68-136 (IKYKYFLELS…HAPWHEGVNC (69 aa)). The RING-type 2; atypical zinc finger occupies 163 to 192 (CPRCKVHIQRTEGCDHMTCSQCNTNFCYRC). The active site involves C176. Residues C181, C184, C189, C192, H205, and C214 each coordinate Zn(2+). A helical transmembrane segment spans residues 243 to 263 (LLIVLGLVLGALAVVIGLFGL).

The protein belongs to the RBR family. RNF217 subfamily.

It localises to the cytoplasm. The protein resides in the membrane. The enzyme catalyses [E2 ubiquitin-conjugating enzyme]-S-ubiquitinyl-L-cysteine + [acceptor protein]-L-lysine = [E2 ubiquitin-conjugating enzyme]-L-cysteine + [acceptor protein]-N(6)-ubiquitinyl-L-lysine.. Its pathway is protein modification; protein ubiquitination. Its function is as follows. E3 ubiquitin-protein ligase which accepts ubiquitin from E2 ubiquitin-conjugating enzymes in the form of a thioester and then directly transfers the ubiquitin to targeted substrates. Mediates the degradation of the iron exporter ferroportin/SLC40A1 and thus regulates iron homeostasis. This chain is E3 ubiquitin-protein ligase RNF217 (rnf217), found in Xenopus laevis (African clawed frog).